The primary structure comprises 81 residues: Large ribosomal subunit protein bL31B (81 aa).

This sequence belongs to the bacterial ribosomal protein bL31 family. Type B subfamily. Part of the 50S ribosomal subunit.

The sequence is that of Large ribosomal subunit protein bL31B (rpmE2) from Lactiplantibacillus plantarum (strain ATCC BAA-793 / NCIMB 8826 / WCFS1) (Lactobacillus plantarum).